The sequence spans 336 residues: ATP-dependent 6-phosphofructokinase (336 aa).

G11 contributes to the ATP binding site. 21–25 (RAVVR) contacts ADP. Residues 72 to 73 (RY) and 102 to 105 (GDGS) contribute to the ATP site. D103 provides a ligand contact to Mg(2+). 125–127 (TID) contacts substrate. Catalysis depends on D127, which acts as the Proton acceptor. Residue R154 coordinates ADP. Substrate is bound by residues R162 and 169-171 (MGR). ADP is bound by residues 185 to 187 (GAD), K211, and 213 to 215 (KKH). Residues E222, R244, and 250-253 (HIQR) contribute to the substrate site.

The protein belongs to the phosphofructokinase type A (PFKA) family. ATP-dependent PFK group I subfamily. Prokaryotic clade 'B1' sub-subfamily. As to quaternary structure, homotetramer. It depends on Mg(2+) as a cofactor.

The protein resides in the cytoplasm. The enzyme catalyses beta-D-fructose 6-phosphate + ATP = beta-D-fructose 1,6-bisphosphate + ADP + H(+). It participates in carbohydrate degradation; glycolysis; D-glyceraldehyde 3-phosphate and glycerone phosphate from D-glucose: step 3/4. Its activity is regulated as follows. Allosterically activated by ADP and other diphosphonucleosides, and allosterically inhibited by phosphoenolpyruvate. Catalyzes the phosphorylation of D-fructose 6-phosphate to fructose 1,6-bisphosphate by ATP, the first committing step of glycolysis. The protein is ATP-dependent 6-phosphofructokinase of Streptococcus suis (strain 05ZYH33).